We begin with the raw amino-acid sequence, 404 residues long: Argininosuccinate synthase (404 aa).

ATP-binding positions include 13–21 (AYSGGLDTS) and alanine 41. L-citrulline-binding residues include tyrosine 93 and serine 98. Glycine 123 is an ATP binding site. L-aspartate contacts are provided by threonine 125, asparagine 129, and aspartate 130. Asparagine 129 serves as a coordination point for L-citrulline. 5 residues coordinate L-citrulline: arginine 133, serine 182, serine 191, glutamate 267, and tyrosine 279.

This sequence belongs to the argininosuccinate synthase family. Type 1 subfamily. In terms of assembly, homotetramer.

The protein resides in the cytoplasm. It catalyses the reaction L-citrulline + L-aspartate + ATP = 2-(N(omega)-L-arginino)succinate + AMP + diphosphate + H(+). It functions in the pathway amino-acid biosynthesis; L-arginine biosynthesis; L-arginine from L-ornithine and carbamoyl phosphate: step 2/3. The chain is Argininosuccinate synthase from Moritella profunda.